Reading from the N-terminus, the 76-residue chain is Probable insulin-like peptide alpha-type 3 (76 aa).

Residues 1-18 form the signal peptide; sequence MFVLLIILSIILAQVTDA. 3 disulfides stabilise this stretch: C28–C58, C40–C71, and C46–C72.

This sequence belongs to the insulin family.

The protein resides in the secreted. The chain is Probable insulin-like peptide alpha-type 3 (ins-23) from Caenorhabditis elegans.